We begin with the raw amino-acid sequence, 248 residues long: 2,3-bisphosphoglycerate-dependent phosphoglycerate mutase (248 aa).

Residues 8–15 (RHGESAWN), 21–22 (TG), Arg60, 87–90 (EKHY), Lys98, 114–115 (RR), and 183–184 (GN) each bind substrate. The Tele-phosphohistidine intermediate role is filled by His9. Glu87 (proton donor/acceptor) is an active-site residue.

This sequence belongs to the phosphoglycerate mutase family. BPG-dependent PGAM subfamily.

It carries out the reaction (2R)-2-phosphoglycerate = (2R)-3-phosphoglycerate. It functions in the pathway carbohydrate degradation; glycolysis; pyruvate from D-glyceraldehyde 3-phosphate: step 3/5. In terms of biological role, catalyzes the interconversion of 2-phosphoglycerate and 3-phosphoglycerate. This is 2,3-bisphosphoglycerate-dependent phosphoglycerate mutase from Bacteroides fragilis (strain ATCC 25285 / DSM 2151 / CCUG 4856 / JCM 11019 / LMG 10263 / NCTC 9343 / Onslow / VPI 2553 / EN-2).